Reading from the N-terminus, the 112-residue chain is UPF0102 protein NIS_1551 (112 aa).

It belongs to the UPF0102 family.

This is UPF0102 protein NIS_1551 from Nitratiruptor sp. (strain SB155-2).